Consider the following 221-residue polypeptide: Deoxyribose-phosphate aldolase (221 aa).

Asp91 serves as the catalytic Proton donor/acceptor. The active-site Schiff-base intermediate with acetaldehyde is Lys153. Residue Lys182 is the Proton donor/acceptor of the active site.

It belongs to the DeoC/FbaB aldolase family. DeoC type 1 subfamily.

The protein resides in the cytoplasm. The catalysed reaction is 2-deoxy-D-ribose 5-phosphate = D-glyceraldehyde 3-phosphate + acetaldehyde. The protein operates within carbohydrate degradation; 2-deoxy-D-ribose 1-phosphate degradation; D-glyceraldehyde 3-phosphate and acetaldehyde from 2-deoxy-alpha-D-ribose 1-phosphate: step 2/2. Functionally, catalyzes a reversible aldol reaction between acetaldehyde and D-glyceraldehyde 3-phosphate to generate 2-deoxy-D-ribose 5-phosphate. The polypeptide is Deoxyribose-phosphate aldolase (Clostridium botulinum (strain Eklund 17B / Type B)).